We begin with the raw amino-acid sequence, 243 residues long: Glutathione S-transferase U14 (243 aa).

The GST N-terminal domain occupies 5 to 87; that stretch reads DTVKLIGCSD…YLDEAWPSDP (83 aa). Glutathione-binding positions include 15–16, 44–45, 58–59, and 71–72; these read DP, EK, KT, and ES. In terms of domain architecture, GST C-terminal spans 93–220; the sequence is NAYDRASARF…MPTVEEVTEL (128 aa). Position 159 is a phosphothreonine (Thr159).

Belongs to the GST superfamily. Tau family.

It is found in the cytoplasm. The protein localises to the cytosol. The enzyme catalyses RX + glutathione = an S-substituted glutathione + a halide anion + H(+). Functionally, may be involved in the conjugation of reduced glutathione to a wide number of exogenous and endogenous hydrophobic electrophiles and have a detoxification role against certain herbicides. The chain is Glutathione S-transferase U14 (GSTU14) from Arabidopsis thaliana (Mouse-ear cress).